The chain runs to 418 residues: UDP-N-acetylglucosamine 1-carboxyvinyltransferase (418 aa).

22–23 contacts phosphoenolpyruvate; that stretch reads KN. Residue Arg-93 participates in UDP-N-acetyl-alpha-D-glucosamine binding. Cys-117 serves as the catalytic Proton donor. A 2-(S-cysteinyl)pyruvic acid O-phosphothioketal modification is found at Cys-117. Residues 122 to 126, Asp-306, and Leu-328 each bind UDP-N-acetyl-alpha-D-glucosamine; that span reads RPIDL.

The protein belongs to the EPSP synthase family. MurA subfamily.

It is found in the cytoplasm. The catalysed reaction is phosphoenolpyruvate + UDP-N-acetyl-alpha-D-glucosamine = UDP-N-acetyl-3-O-(1-carboxyvinyl)-alpha-D-glucosamine + phosphate. Its pathway is cell wall biogenesis; peptidoglycan biosynthesis. Its function is as follows. Cell wall formation. Adds enolpyruvyl to UDP-N-acetylglucosamine. The polypeptide is UDP-N-acetylglucosamine 1-carboxyvinyltransferase (Campylobacter hominis (strain ATCC BAA-381 / DSM 21671 / CCUG 45161 / LMG 19568 / NCTC 13146 / CH001A)).